The sequence spans 545 residues: CTP synthase (545 aa).

Residues 1-266 (MTTNYIFVTG…DDYICKRFSL (266 aa)) form an amidoligase domain region. Position 14 (Ser14) interacts with CTP. Position 14 (Ser14) interacts with UTP. Residues 15–20 (SLGKGI) and Asp72 contribute to the ATP site. The Mg(2+) site is built by Asp72 and Glu140. Residues 147–149 (DIE), 187–192 (KTKPTQ), and Lys223 each bind CTP. Residues 187–192 (KTKPTQ) and Lys223 contribute to the UTP site. 239 to 241 (KDV) provides a ligand contact to ATP. Residues 291-542 (TIGMIGKYVE…VKAAGDYQKR (252 aa)) enclose the Glutamine amidotransferase type-1 domain. Residue Gly352 participates in L-glutamine binding. The Nucleophile; for glutamine hydrolysis role is filled by Cys379. L-glutamine contacts are provided by residues 380–383 (LGMQ), Glu403, and Arg470. Residues His515 and Glu517 contribute to the active site.

This sequence belongs to the CTP synthase family. As to quaternary structure, homotetramer.

It carries out the reaction UTP + L-glutamine + ATP + H2O = CTP + L-glutamate + ADP + phosphate + 2 H(+). The enzyme catalyses L-glutamine + H2O = L-glutamate + NH4(+). The catalysed reaction is UTP + NH4(+) + ATP = CTP + ADP + phosphate + 2 H(+). It participates in pyrimidine metabolism; CTP biosynthesis via de novo pathway; CTP from UDP: step 2/2. Its activity is regulated as follows. Allosterically activated by GTP, when glutamine is the substrate; GTP has no effect on the reaction when ammonia is the substrate. The allosteric effector GTP functions by stabilizing the protein conformation that binds the tetrahedral intermediate(s) formed during glutamine hydrolysis. Inhibited by the product CTP, via allosteric rather than competitive inhibition. Catalyzes the ATP-dependent amination of UTP to CTP with either L-glutamine or ammonia as the source of nitrogen. Regulates intracellular CTP levels through interactions with the four ribonucleotide triphosphates. This is CTP synthase from Yersinia pseudotuberculosis serotype O:1b (strain IP 31758).